Here is a 263-residue protein sequence, read N- to C-terminus: 3-deoxy-manno-octulosonate cytidylyltransferase (263 aa).

The protein belongs to the KdsB family.

The protein resides in the cytoplasm. It carries out the reaction 3-deoxy-alpha-D-manno-oct-2-ulosonate + CTP = CMP-3-deoxy-beta-D-manno-octulosonate + diphosphate. Its pathway is nucleotide-sugar biosynthesis; CMP-3-deoxy-D-manno-octulosonate biosynthesis; CMP-3-deoxy-D-manno-octulosonate from 3-deoxy-D-manno-octulosonate and CTP: step 1/1. It participates in bacterial outer membrane biogenesis; lipopolysaccharide biosynthesis. Activates KDO (a required 8-carbon sugar) for incorporation into bacterial lipopolysaccharide in Gram-negative bacteria. This is 3-deoxy-manno-octulosonate cytidylyltransferase from Burkholderia mallei (strain NCTC 10229).